The following is a 118-amino-acid chain: Large ribosomal subunit protein bL19 (118 aa).

Belongs to the bacterial ribosomal protein bL19 family.

This protein is located at the 30S-50S ribosomal subunit interface and may play a role in the structure and function of the aminoacyl-tRNA binding site. This chain is Large ribosomal subunit protein bL19, found in Campylobacter fetus subsp. fetus (strain 82-40).